Reading from the N-terminus, the 315-residue chain is Porphobilinogen deaminase (315 aa).

Position 241 is an S-(dipyrrolylmethanemethyl)cysteine (C241).

This sequence belongs to the HMBS family. In terms of assembly, monomer. Dipyrromethane is required as a cofactor.

It catalyses the reaction 4 porphobilinogen + H2O = hydroxymethylbilane + 4 NH4(+). It participates in porphyrin-containing compound metabolism; protoporphyrin-IX biosynthesis; coproporphyrinogen-III from 5-aminolevulinate: step 2/4. In terms of biological role, tetrapolymerization of the monopyrrole PBG into the hydroxymethylbilane pre-uroporphyrinogen in several discrete steps. The chain is Porphobilinogen deaminase from Nitratidesulfovibrio vulgaris (strain DP4) (Desulfovibrio vulgaris).